A 135-amino-acid polypeptide reads, in one-letter code: Holo-[acyl-carrier-protein] synthase (135 aa).

Mg(2+) is bound by residues D8 and E57.

The protein belongs to the P-Pant transferase superfamily. AcpS family. It depends on Mg(2+) as a cofactor.

It is found in the cytoplasm. It carries out the reaction apo-[ACP] + CoA = holo-[ACP] + adenosine 3',5'-bisphosphate + H(+). In terms of biological role, transfers the 4'-phosphopantetheine moiety from coenzyme A to a Ser of acyl-carrier-protein. The sequence is that of Holo-[acyl-carrier-protein] synthase from Methylobacterium sp. (strain 4-46).